We begin with the raw amino-acid sequence, 639 residues long: 3-oxocholoyl-CoA 4-desaturase (639 aa).

Q101 lines the FMN pocket. 155 to 158 (HAAH) contributes to the substrate binding site. Catalysis depends on Y160, which acts as the Proton donor. FMN is bound by residues R208, R286, and 308-309 (GR). [4Fe-4S] cluster is bound by residues C332 and C335. Q337 contacts FAD. Residues C339 and C353 each coordinate [4Fe-4S] cluster. Residues A383, E402, Q410, K420, and V447 each contribute to the FAD site.

The protein in the N-terminal section; belongs to the NADH:flavin oxidoreductase/NADH oxidase family. FMN serves as cofactor. The cofactor is FAD. [4Fe-4S] cluster is required as a cofactor.

It catalyses the reaction 7alpha,12alpha-dihydroxy-3-oxochol-24-oyl-CoA + NAD(+) = 7alpha,12alpha-dihydroxy-3-oxochol-4-en-24-oyl-CoA + NADH + H(+). The enzyme catalyses 7alpha-hydroxy-3-oxochol-24-oyl-CoA + NAD(+) = 7alpha-hydroxy-3-oxochol-4-en-24-oyl-CoA + NADH + H(+). It functions in the pathway lipid metabolism; bile acid degradation. Its function is as follows. Stereo-specific NAD(H)-dependent 3-oxo-delta4-cholenoic acid oxidoreductase involved in bile acid 7alpha-dehydroxylation. The sequence is that of 3-oxocholoyl-CoA 4-desaturase from Clostridium scindens (strain JCM 10418 / VPI 12708).